Reading from the N-terminus, the 20-residue chain is Small ribosomal subunit protein bS20 (20 aa).

The tract at residues 1–20 (ANNPGARKAIRKIEARTEVN) is disordered. Basic and acidic residues predominate over residues 11 to 20 (RKIEARTEVN).

This sequence belongs to the bacterial ribosomal protein bS20 family.

In terms of biological role, binds directly to 16S ribosomal RNA. This is Small ribosomal subunit protein bS20 (rpsT) from Brevundimonas vesicularis (Pseudomonas vesicularis).